Consider the following 259-residue polypeptide: Probable ABC transporter permease protein RF_0080 (259 aa).

Helical transmembrane passes span threonine 13–isoleucine 35, leucine 49–valine 69, valine 148–methionine 168, proline 195–isoleucine 215, and alanine 237–phenylalanine 257.

The protein belongs to the MlaE permease family.

It is found in the cell inner membrane. Its function is as follows. Could be part of an ABC transporter complex. This is Probable ABC transporter permease protein RF_0080 from Rickettsia felis (strain ATCC VR-1525 / URRWXCal2) (Rickettsia azadi).